The following is a 347-amino-acid chain: Protein-glutamate methylesterase/protein-glutamine glutaminase 2 (347 aa).

The Response regulatory domain maps to 2–119; that stretch reads RVMIVDDSAV…LGGADLYRKD (118 aa). A 4-aspartylphosphate modification is found at Asp52. Positions 131–153 are disordered; that stretch reads AARPAPPQAAPRPTLAPPSSDPA. Over residues 134–150 the composition is skewed to pro residues; sequence PAPPQAAPRPTLAPPSS. A CheB-type methylesterase domain is found at 152–346; that stretch reads PAGPIEAVVV…PYIASRARSV (195 aa). Residues Ser164, His191, and Asp288 contribute to the active site.

It belongs to the CheB family. Phosphorylated by CheA. Phosphorylation of the N-terminal regulatory domain activates the methylesterase activity.

Its subcellular location is the cytoplasm. It carries out the reaction [protein]-L-glutamate 5-O-methyl ester + H2O = L-glutamyl-[protein] + methanol + H(+). The enzyme catalyses L-glutaminyl-[protein] + H2O = L-glutamyl-[protein] + NH4(+). Involved in chemotaxis. Part of a chemotaxis signal transduction system that modulates chemotaxis in response to various stimuli. Catalyzes the demethylation of specific methylglutamate residues introduced into the chemoreceptors (methyl-accepting chemotaxis proteins or MCP) by CheR. Also mediates the irreversible deamidation of specific glutamine residues to glutamic acid. This chain is Protein-glutamate methylesterase/protein-glutamine glutaminase 2, found in Caulobacter vibrioides (strain ATCC 19089 / CIP 103742 / CB 15) (Caulobacter crescentus).